The chain runs to 1285 residues: Protein cramped-like (1285 aa).

Positions 1–161 (MTVKLGDAGS…EGKKVRRQWE (161 aa)) are disordered. The segment covering 13–24 (EGLKKLGKRTAD) has biased composition (basic and acidic residues). Over residues 57-71 (PAPPRGLPTPSPPQG) the composition is skewed to pro residues. The span at 100–116 (GSGGASGSGPRGKGSDG) shows a compositional bias: gly residues. Low complexity-rich tracts occupy residues 117-126 (GASSSGNVSG) and 134-147 (GGSR…GSSG). Residues 148-161 (PEKEEGKKVRRQWE) show a composition bias toward basic and acidic residues. One can recognise an SANT domain in the interval 158–221 (RQWESWSTED…FYYRTWHKIT (64 aa)). Residue Ser304 is modified to Phosphoserine. Disordered regions lie at residues 456 to 519 (GQLK…GPHL), 579 to 673 (RADT…VPAS), 766 to 843 (NTAS…SDSD), 994 to 1055 (SSGI…SPAL), 1068 to 1107 (GLSI…LSQG), and 1132 to 1172 (PLSP…YPSD). Over residues 479–503 (ASQSSGESSPESAPAEGAAPSLSSP) the composition is skewed to low complexity. Composition is skewed to basic and acidic residues over residues 505 to 519 (APDR…GPHL) and 579 to 589 (RADTRSGREHP). Polar residues-rich tracts occupy residues 654–664 (EHLSSQGQPAT) and 766–784 (NTAS…STTP). Residues 792–803 (NSRSPRCSRNPS) show a composition bias toward low complexity. The segment covering 804–813 (TLRSNKTFPS) has biased composition (polar residues). A compositionally biased stretch (low complexity) spans 833-843 (GPSSTGSSDSD). Positions 994–1012 (SSGISPLSSEQATTAISGQ) are enriched in polar residues. 2 stretches are compositionally biased toward low complexity: residues 1069 to 1086 (LSIP…LSPP) and 1141 to 1156 (SDSS…SPQP). Position 1284 is a phosphoserine (Ser1284).

The protein belongs to the cramped family.

It localises to the nucleus. This Mus musculus (Mouse) protein is Protein cramped-like.